Here is a 76-residue protein sequence, read N- to C-terminus: Large ribosomal subunit protein bL31 (76 aa).

Zn(2+)-binding residues include cysteine 16, cysteine 18, cysteine 38, and cysteine 41.

The protein belongs to the bacterial ribosomal protein bL31 family. Type A subfamily. Part of the 50S ribosomal subunit. Zn(2+) serves as cofactor.

Functionally, binds the 23S rRNA. This Nocardia farcinica (strain IFM 10152) protein is Large ribosomal subunit protein bL31.